The chain runs to 1036 residues: Lethal(2) giant larvae protein homolog 1 (1036 aa).

WD repeat units follow at residues 38-71 (SALA…FTGL), 78-119 (VTQM…GLSF), 139-175 (VTVV…GQTL), 199-233 (SLQG…EHVF), 239-271 (LESL…GSPP), 289-331 (AINK…ETLV), 339-373 (VIDF…VLDL), 395-473 (TCSA…YKLS), 517-592 (QKVA…RVLI), and 601-662 (TAVA…LRQS). Phosphoserine is present on serine 662. Residues 670–694 (RVSGKKRATTASSKLQEANAQLAEQ) form a disordered region. A compositionally biased stretch (polar residues) spans 678–693 (TTASSKLQEANAQLAE). WD repeat units lie at residues 722–782 (VRCL…KEVQ), 791–843 (AIAV…VSAK), 848–901 (LTAH…VHYS), and 915–938 (VFTR…SLSA). Phosphothreonine is present on threonine 957. A phosphoserine mark is found at serine 964, serine 982, and serine 989. The disordered stretch occupies residues 980-1002 (PESCEGSPSSAHSKRADTMEPPE).

The protein belongs to the WD repeat L(2)GL family. In terms of assembly, associated with nonmuscle myosin II heavy chain. Interacts with PRKCI/aPKC, PARD6B/Par-6 and PARD6A. Interacts with STX4A. Interacts with DCAF1. Interacts with RAB10 (GDP-bound form); the interaction is direct and promotes RAB10 association with membranes and activation through competition with the Rab inhibitor GDI1. Post-translationally, phosphorylated by PRKCI. Expressed at high level in the testis and at lower level in ovary, brain, spleen and kidney.

Its subcellular location is the early endosome membrane. The protein resides in the golgi apparatus. It is found in the trans-Golgi network membrane. The protein localises to the golgi apparatus membrane. It localises to the cell projection. Its subcellular location is the axon. The protein resides in the cytoplasm. It is found in the cytoskeleton. Its function is as follows. Cortical cytoskeleton protein found in a complex involved in maintaining cell polarity and epithelial integrity. Involved in the regulation of mitotic spindle orientation, proliferation, differentiation and tissue organization of neuroepithelial cells. Involved in axonogenesis through RAB10 activation thereby regulating vesicular membrane trafficking toward the axonal plasma membrane. The chain is Lethal(2) giant larvae protein homolog 1 (Llgl1) from Rattus norvegicus (Rat).